We begin with the raw amino-acid sequence, 62 residues long: Photosystem II reaction center protein Z (62 aa).

The next 2 membrane-spanning stretches (helical) occupy residues 8 to 28 and 41 to 61; these read AIFA…VVFA and FSGT…NSLI.

This sequence belongs to the PsbZ family. PSII is composed of 1 copy each of membrane proteins PsbA, PsbB, PsbC, PsbD, PsbE, PsbF, PsbH, PsbI, PsbJ, PsbK, PsbL, PsbM, PsbT, PsbY, PsbZ, Psb30/Ycf12, at least 3 peripheral proteins of the oxygen-evolving complex and a large number of cofactors. It forms dimeric complexes.

It is found in the plastid. It localises to the chloroplast thylakoid membrane. In terms of biological role, may control the interaction of photosystem II (PSII) cores with the light-harvesting antenna, regulates electron flow through the 2 photosystem reaction centers. PSII is a light-driven water plastoquinone oxidoreductase, using light energy to abstract electrons from H(2)O, generating a proton gradient subsequently used for ATP formation. The protein is Photosystem II reaction center protein Z of Acorus gramineus (Dwarf sweet flag).